Consider the following 289-residue polypeptide: Protoheme IX farnesyltransferase (289 aa).

The next 9 helical transmembrane spans lie at 9–29 (VALM…PVMM), 40–60 (LIAV…TINC), 89–109 (LTFG…LVNW), 110–130 (PSAL…TLGL), 134–154 (TPSN…IGWS), 155–175 (AVTG…FFWT), 190–209 (YAAA…VVTR), 228–248 (VAST…WFLV), and 269–289 (FHMS…TALV).

The protein belongs to the UbiA prenyltransferase family. Protoheme IX farnesyltransferase subfamily.

It localises to the cell membrane. It carries out the reaction heme b + (2E,6E)-farnesyl diphosphate + H2O = Fe(II)-heme o + diphosphate. The protein operates within porphyrin-containing compound metabolism; heme O biosynthesis; heme O from protoheme: step 1/1. Its function is as follows. Converts heme B (protoheme IX) to heme O by substitution of the vinyl group on carbon 2 of heme B porphyrin ring with a hydroxyethyl farnesyl side group. The polypeptide is Protoheme IX farnesyltransferase (Frankia casuarinae (strain DSM 45818 / CECT 9043 / HFP020203 / CcI3)).